Consider the following 424-residue polypeptide: Zinc metalloproteinase-disintegrin-like brevilysin H2a (424 aa).

Gln-1 bears the Pyrrolidone carboxylic acid mark. The region spanning 9–207 (RYVKLAIVAD…YKPQCILNEP (199 aa)) is the Peptidase M12B domain. An N-linked (GlcNAc...) asparagine glycan is attached at Asn-69. Asp-96 contributes to the Ca(2+) binding site. 3 disulfides stabilise this stretch: Cys-120–Cys-202, Cys-164–Cys-186, and Cys-166–Cys-169. Residue His-145 participates in Zn(2+) binding. Residue Glu-146 is part of the active site. Zn(2+) contacts are provided by His-149 and His-155. A glycan (N-linked (GlcNAc...) asparagine) is linked at Asn-185. Ca(2+) contacts are provided by Cys-202, Asn-205, Val-217, Asn-220, Leu-222, Glu-224, Glu-227, and Asp-230. One can recognise a Disintegrin domain in the interval 215 to 301 (PPVCGNELLE…DCPTDDLQRN (87 aa)). Intrachain disulfides connect Cys-218-Cys-247, Cys-229-Cys-242, Cys-231-Cys-237, Cys-241-Cys-264, Cys-255-Cys-261, Cys-260-Cys-286, Cys-273-Cys-293, Cys-280-Cys-312, Cys-305-Cys-317, Cys-324-Cys-374, Cys-339-Cys-385, Cys-352-Cys-362, Cys-369-Cys-411, and Cys-405-Cys-417. A D/ECD-tripeptide motif is present at residues 279-281 (DCD). Positions 281, 284, and 296 each coordinate Ca(2+). A glycan (N-linked (GlcNAc...) asparagine) is linked at Asn-331.

Belongs to the venom metalloproteinase (M12B) family. P-III subfamily. P-IIIa sub-subfamily. In terms of assembly, monomer. Requires Zn(2+) as cofactor. Glycosylated. As to expression, expressed by the venom gland.

It is found in the secreted. Its activity is regulated as follows. Its proteolytic activity is inhibited by EDTA, TPEN, 1,10-phenanthroline, and some thiol compounds, but is enhanced by alkaline earth metal ions (Mg2+, Ca2+, Sr2+, and Ba2+). Its activity is not modulated by urea (4 M). Non-hemorrhagic metalloproteinase that degrades fibrinogen. The alpha chain (FGA) is rapidly degraded, the beta chain (FGB) is degraded very slowly, while the gamma chain is left intact. Shows a prefential cleavage at X-Leu bonds. Cleaves insulin B chain at '29-His-|-Leu-30', '33-Ser-|-His-34', '38-Ala-|-Leu-39' and '40-Tyr-|-Leu-41' bonds. The sequence is that of Zinc metalloproteinase-disintegrin-like brevilysin H2a from Gloydius brevicauda (Korean slamosa snake).